The sequence spans 84 residues: Turripeptide IX-01 (84 aa).

The N-terminal stretch at M1–A21 is a signal peptide. A propeptide spanning residues T22–H39 is cleaved from the precursor. 3 disulfide bridges follow: C48/C70, C55/C74, and C60/C81.

In terms of tissue distribution, expressed by the venom duct.

The protein resides in the secreted. This is Turripeptide IX-01 from Gemmula speciosa (Splendid gem-turris).